A 92-amino-acid chain; its full sequence is Small ribosomal subunit protein uS19 (92 aa).

This sequence belongs to the universal ribosomal protein uS19 family.

Protein S19 forms a complex with S13 that binds strongly to the 16S ribosomal RNA. This is Small ribosomal subunit protein uS19 from Rickettsia akari (strain Hartford).